The following is a 183-amino-acid chain: Thioredoxin/glutathione peroxidase BtuE (183 aa).

The active site involves C37.

It belongs to the glutathione peroxidase family. BtuE subfamily.

The protein localises to the periplasm. The enzyme catalyses 2 glutathione + H2O2 = glutathione disulfide + 2 H2O. It carries out the reaction a hydroperoxide + [thioredoxin]-dithiol = an alcohol + [thioredoxin]-disulfide + H2O. Functionally, non-specific peroxidase that can use thioredoxin or glutathione as a reducing agent. In vitro, utilizes preferentially thioredoxin A to decompose hydrogen peroxide as well as cumene-, tert-butyl-, and linoleic acid hydroperoxides, suggesting that it may have one or more organic hydroperoxide as its physiological substrate. The protein is Thioredoxin/glutathione peroxidase BtuE of Escherichia coli (strain K12).